The sequence spans 231 residues: Large ribosomal subunit protein uL1 (231 aa).

It belongs to the universal ribosomal protein uL1 family. In terms of assembly, part of the 50S ribosomal subunit.

Binds directly to 23S rRNA. The L1 stalk is quite mobile in the ribosome, and is involved in E site tRNA release. Its function is as follows. Protein L1 is also a translational repressor protein, it controls the translation of the L11 operon by binding to its mRNA. The protein is Large ribosomal subunit protein uL1 of Chromobacterium violaceum (strain ATCC 12472 / DSM 30191 / JCM 1249 / CCUG 213 / NBRC 12614 / NCIMB 9131 / NCTC 9757 / MK).